Consider the following 520-residue polypeptide: Keratin, type II cytoskeletal 4 (520 aa).

Positions 1 to 136 (MIARQQCVRG…DPEIQKVRTE (136 aa)) are head. The residue at position 13 (arginine 13) is an Omega-N-methylarginine. Positions 137–172 (EREQIKLLNNKFASFIDKVQFLEQQNKVLETKWNLL) are coil 1A. Residues 137–450 (EREQIKLLNN…KLLEGEEYRM (314 aa)) form the IF rod domain. Positions 173–191 (QQQTTTTSSKNLEPLFETY) are linker 1. The segment at 192-284 (LSVLRKQLDT…LYDAELSQMQ (93 aa)) is coil 1B. The tract at residues 285–307 (THVSDTSVVLSMDNNRNLDLDSI) is linker 12. The interval 308–447 (IAEVRAQYEE…TYRKLLEGEE (140 aa)) is coil 2. Positions 448–520 (YRMSGECQSA…ISTTTLNKRR (73 aa)) are tail. The tract at residues 500 to 520 (GSVSGSSSSKIISTTTLNKRR) is disordered. Positions 503–514 (SGSSSSKIISTT) are enriched in low complexity.

Belongs to the intermediate filament family. In terms of assembly, heterotetramer of two type I and two type II keratins. Keratin-4 is generally associated with keratin-13. Detected in the suprabasal layer of the stratified epithelium of the esophagus, exocervix, vagina, mouth and lingual mucosa, and in cells and cell clusters in the mucosa and serous gland ducts of the esophageal submucosa (at protein level). Expressed widely in the exocervix and esophageal epithelium, with lowest levels detected in the basal cell layer.

The polypeptide is Keratin, type II cytoskeletal 4 (KRT4) (Homo sapiens (Human)).